Consider the following 179-residue polypeptide: Acireductone dioxygenase (179 aa).

The Fe(2+) site is built by histidine 97, histidine 99, glutamate 103, and histidine 141. Histidine 97, histidine 99, glutamate 103, and histidine 141 together coordinate Ni(2+).

The protein belongs to the acireductone dioxygenase (ARD) family. Monomer. Fe(2+) serves as cofactor. The cofactor is Ni(2+).

It catalyses the reaction 1,2-dihydroxy-5-(methylsulfanyl)pent-1-en-3-one + O2 = 3-(methylsulfanyl)propanoate + CO + formate + 2 H(+). The catalysed reaction is 1,2-dihydroxy-5-(methylsulfanyl)pent-1-en-3-one + O2 = 4-methylsulfanyl-2-oxobutanoate + formate + 2 H(+). It participates in amino-acid biosynthesis; L-methionine biosynthesis via salvage pathway; L-methionine from S-methyl-5-thio-alpha-D-ribose 1-phosphate: step 5/6. Catalyzes 2 different reactions between oxygen and the acireductone 1,2-dihydroxy-3-keto-5-methylthiopentene (DHK-MTPene) depending upon the metal bound in the active site. Fe-containing acireductone dioxygenase (Fe-ARD) produces formate and 2-keto-4-methylthiobutyrate (KMTB), the alpha-ketoacid precursor of methionine in the methionine recycle pathway. Ni-containing acireductone dioxygenase (Ni-ARD) produces methylthiopropionate, carbon monoxide and formate, and does not lie on the methionine recycle pathway. The sequence is that of Acireductone dioxygenase from Granulibacter bethesdensis (strain ATCC BAA-1260 / CGDNIH1).